The following is a 384-amino-acid chain: PqqA peptide cyclase (384 aa).

The 217-residue stretch at 15-231 folds into the Radical SAM core domain; the sequence is PGPPLWLLAE…NQWRDKLAAE (217 aa). [4Fe-4S] cluster-binding residues include Cys29, Cys33, and Cys36.

It belongs to the radical SAM superfamily. PqqE family. In terms of assembly, interacts with PqqD. The interaction is necessary for activity of PqqE. The cofactor is [4Fe-4S] cluster.

It carries out the reaction [PQQ precursor protein] + S-adenosyl-L-methionine = E-Y cross-linked-[PQQ precursor protein] + 5'-deoxyadenosine + L-methionine + H(+). It functions in the pathway cofactor biosynthesis; pyrroloquinoline quinone biosynthesis. Functionally, catalyzes the cross-linking of a glutamate residue and a tyrosine residue in the PqqA protein as part of the biosynthesis of pyrroloquinoline quinone (PQQ). This chain is PqqA peptide cyclase, found in Ectopseudomonas mendocina (strain ymp) (Pseudomonas mendocina).